The primary structure comprises 183 residues: Shikimate kinase (183 aa).

ATP is bound at residue 18 to 23 (GVGKTT). A Mg(2+)-binding site is contributed by Thr-22. 3 residues coordinate substrate: Asp-40, Arg-64, and Gly-86. Arg-125 serves as a coordination point for ATP. Arg-143 is a binding site for substrate.

The protein belongs to the shikimate kinase family. In terms of assembly, monomer. Mg(2+) is required as a cofactor.

The protein localises to the cytoplasm. It carries out the reaction shikimate + ATP = 3-phosphoshikimate + ADP + H(+). It participates in metabolic intermediate biosynthesis; chorismate biosynthesis; chorismate from D-erythrose 4-phosphate and phosphoenolpyruvate: step 5/7. In terms of biological role, catalyzes the specific phosphorylation of the 3-hydroxyl group of shikimic acid using ATP as a cosubstrate. This Oceanobacillus iheyensis (strain DSM 14371 / CIP 107618 / JCM 11309 / KCTC 3954 / HTE831) protein is Shikimate kinase.